Here is a 344-residue protein sequence, read N- to C-terminus: Beta-1,4-galactosyltransferase 4 (344 aa).

The Cytoplasmic portion of the chain corresponds to 1–12 (MGCNPPYLLPYR). The chain crosses the membrane as a helical; Signal-anchor for type II membrane protein span at residues 13–38 (LRLLLFFTLCLTVVGWVTSNYFVDPI). Over 39–344 (QVIPKAKVFM…NITVDFWTGV (306 aa)) the chain is Lumenal. Residues C77 and C118 are joined by a disulfide bond. UDP-alpha-D-galactose is bound by residues 129–133 (PHRNR), 168–170 (FNR), and 195–196 (VD). A disulfide bridge links C189 with C208. D196 lines the Mn(2+) pocket. N220 carries an N-linked (GlcNAc...) asparagine glycan. The UDP-alpha-D-galactose site is built by Y224 and W256. 258–261 (GEDD) contributes to the N-acetyl-D-glucosamine binding site. H289 contributes to the Mn(2+) binding site. A UDP-alpha-D-galactose-binding site is contributed by 289–291 (HTR). R301 contacts N-acetyl-D-glucosamine. A glycan (N-linked (GlcNAc...) asparagine) is linked at N335.

This sequence belongs to the glycosyltransferase 7 family. It depends on Mn(2+) as a cofactor.

The protein resides in the golgi apparatus. The protein localises to the golgi stack membrane. The enzyme catalyses N-acetyl-D-glucosamine + UDP-alpha-D-galactose = beta-D-galactosyl-(1-&gt;4)-N-acetyl-D-glucosamine + UDP + H(+). The catalysed reaction is a beta-D-GlcNAc-(1-&gt;3)-beta-D-Gal-(1-&gt;4)-beta-D-Glc-(1&lt;-&gt;1)-Cer(d18:1(4E)) + UDP-alpha-D-galactose = a neolactoside nLc4Cer(d18:1(4E)) + UDP + H(+). The protein operates within protein modification; protein glycosylation. In terms of biological role, galactose (Gal) transferase involved in the biosynthesis of glycoproteins, proteoglycans, and glycosyphingolipids. Catalyzes the transfer of Gal residue via a beta1-&gt;4 linkage from UDP-Gal to the non-reducing terminal N-acetyl glucosamine 6-O-sulfate (6-O-sulfoGlcNAc) in the linearly growing chain of both N- and O-linked keratan sulfate proteoglycans. Cooperates with B3GNT7 N-acetyl glucosamine transferase and CHST6 and CHST1 sulfotransferases to construct and elongate mono- and disulfated disaccharide units [-&gt;3Galbeta1-&gt;4(6-sulfoGlcNAcbeta)1-&gt;] and [-&gt;3(6-sulfoGalbeta)1-&gt;4(6-sulfoGlcNAcbeta)1-&gt;] within keratan sulfate polymer. The polypeptide is Beta-1,4-galactosyltransferase 4 (B4GALT4) (Cricetulus griseus (Chinese hamster)).